The chain runs to 370 residues: L-selectin (370 aa).

A signal peptide spans 1 to 28; sequence MLCPWKCQNAQRGLWNVFKLWVWIMLCC. A propeptide spanning residues 29 to 38 is cleaved from the precursor; it reads DFFAHHGTDC. Residues 39 to 333 lie on the Extracellular side of the membrane; it reads WTYHYSKRPM…SINEESDYNP (295 aa). Residues 55-155 form the C-type lectin domain; that stretch reads AFCRENYTDL…ACHKAKTALC (101 aa). Intrachain disulfides connect cysteine 57–cysteine 155, cysteine 128–cysteine 147, cysteine 128–cysteine 160, cysteine 160–cysteine 171, cysteine 165–cysteine 180, cysteine 182–cysteine 191, cysteine 197–cysteine 241, cysteine 227–cysteine 254, cysteine 259–cysteine 303, and cysteine 289–cysteine 316. Residues asparagine 60, asparagine 77, and asparagine 104 are each glycosylated (N-linked (GlcNAc...) asparagine). 5 residues coordinate Ca(2+): glutamate 118, asparagine 120, glutamate 126, asparagine 143, and aspartate 144. One can recognise an EGF-like domain in the interval 156–192; it reads YTASCKPWSCSGHGQCVEVINNYTCNCDLGYYGPECQ. Asparagine 177 carries N-linked (GlcNAc...) asparagine glycosylation. 2 Sushi domains span residues 195–256 and 257–318; these read TQCV…TCRV and IQCE…RCQK. Residues asparagine 216, asparagine 226, and asparagine 246 are each glycosylated (N-linked (GlcNAc...) asparagine). N-linked (GlcNAc...) asparagine glycans are attached at residues asparagine 308 and asparagine 320. The chain crosses the membrane as a helical span at residues 334 to 354; that stretch reads LFIPVAVMVTAFSGLAFIIWL. Residues 355 to 370 lie on the Cytoplasmic side of the membrane; it reads ARRLKRKSKKVSEKHG.

It belongs to the selectin/LECAM family. As to quaternary structure, interaction with SELPLG/PSGL1 and PODXL2 is required for promoting recruitment and rolling of leukocytes. This interaction is dependent on the sialyl Lewis X glycan modification of SELPLG and PODXL2, and tyrosine sulfation modifications of SELPLG. Sulfation on 'Tyr-51' of SELPLG is important for L-selectin binding. In terms of processing, N-glycosylated. Highly expressed in lymphocytes from peripheral lymph nodes. Low in lymphocytes isolated from Peyer patches.

Its subcellular location is the cell membrane. Functionally, calcium-dependent lectin that mediates cell adhesion by binding to glycoproteins on neighboring cells. Mediates the adherence of lymphocytes to endothelial cells of high endothelial venules in peripheral lymph nodes. Promotes initial tethering and rolling of leukocytes in endothelia. The polypeptide is L-selectin (SELL) (Bos taurus (Bovine)).